Here is a 291-residue protein sequence, read N- to C-terminus: Tyrosine isonitrile desaturase (291 aa).

Fe cation-binding residues include H110, D112, and H259.

Belongs to the TfdA dioxygenase family. In terms of assembly, homotrimer in solution. Requires Fe(2+) as cofactor.

The catalysed reaction is (2S)-3-(4-hydroxyphenyl)-2-isocyanopropanoate + 2-oxoglutarate + O2 = (2E)-3-(4-hydroxyphenyl)-2-isocyanoprop-2-enoate + succinate + CO2 + H2O. In terms of biological role, involved in the biosynthesis of paerucumarin, a cyclized isocyano derivative of tyrosine. Catalyzes the 2-oxoglutarate-dependent oxidation of tyrosine isonitrile. In Pseudomonas aeruginosa (strain ATCC 15692 / DSM 22644 / CIP 104116 / JCM 14847 / LMG 12228 / 1C / PRS 101 / PAO1), this protein is Tyrosine isonitrile desaturase.